A 254-amino-acid polypeptide reads, in one-letter code: Ribosomal RNA small subunit methyltransferase J (254 aa).

S-adenosyl-L-methionine is bound by residues 107–108 (RD), 123–124 (ER), and D174.

Belongs to the methyltransferase superfamily. RsmJ family.

It is found in the cytoplasm. It catalyses the reaction guanosine(1516) in 16S rRNA + S-adenosyl-L-methionine = N(2)-methylguanosine(1516) in 16S rRNA + S-adenosyl-L-homocysteine + H(+). Functionally, specifically methylates the guanosine in position 1516 of 16S rRNA. The protein is Ribosomal RNA small subunit methyltransferase J of Coxiella burnetii (strain CbuK_Q154) (Coxiella burnetii (strain Q154)).